The primary structure comprises 552 residues: Putative transport protein YE4162 (552 aa).

6 consecutive transmembrane segments (helical) span residues 1–21 (MSAI…GLWI), 26–46 (VYGV…VGHF), 65–85 (FGLI…FFSS), 96–116 (FAIL…KLFA), 119–139 (LPII…LGAA), and 158–178 (MGYA…MWLI). 2 consecutive RCK C-terminal domains span residues 192–276 (EFDS…VVGE) and 279–361 (DVTL…VVGN). 6 helical membrane passes run 371–391 (MLPV…PLFI), 393–413 (GFPA…ALIL), 439–459 (IVLF…NTLV), 464–484 (LAWI…VGIL), 493–513 (YLTL…LAFA), and 530–550 (VYPL…VLFW).

It belongs to the AAE transporter (TC 2.A.81) family. YidE subfamily.

The protein localises to the cell membrane. This is Putative transport protein YE4162 from Yersinia enterocolitica serotype O:8 / biotype 1B (strain NCTC 13174 / 8081).